A 334-amino-acid polypeptide reads, in one-letter code: MRIVIDGMGGDKAPEEIIKGAVSALDSYEDIELIITGIEKHLNRELNKYNFPEDRVKIIPASEIISMNESPSKALRKKKDSSIVKGINLVKEDKATAFISAGNTGAVMAGGLFLLGRLPSIKRPAIATVFPSRNGGTLVIDAGANVDSKPENLNQFAIMGQIYSKHVLGVKNPRVGLLSIGEEQAKGNQLTKGAFSLLDEDKRIINFVGNVEGRDIFNGSCDVVVCDGFVGNVVLKTTEGAASYIFDLIKDTFNKNILTKLSGLMIKPFLKKQMALVDYRQYGGAPLLGVNGVVIISHGSSNSTAIKNAIKVAKETVNKNVVGLIKQEINKDGE.

This sequence belongs to the PlsX family. As to quaternary structure, homodimer. Probably interacts with PlsY.

The protein resides in the cytoplasm. It catalyses the reaction a fatty acyl-[ACP] + phosphate = an acyl phosphate + holo-[ACP]. It functions in the pathway lipid metabolism; phospholipid metabolism. Functionally, catalyzes the reversible formation of acyl-phosphate (acyl-PO(4)) from acyl-[acyl-carrier-protein] (acyl-ACP). This enzyme utilizes acyl-ACP as fatty acyl donor, but not acyl-CoA. This Halothermothrix orenii (strain H 168 / OCM 544 / DSM 9562) protein is Phosphate acyltransferase.